A 265-amino-acid chain; its full sequence is 4-hydroxy-tetrahydrodipicolinate reductase (265 aa).

NAD(+) is bound by residues 7–12 and Asp33; that span reads GASGRM. Arg34 is a binding site for NADP(+). NAD(+) is bound by residues 96–98 and 120–123; these read GTT and AANM. His153 acts as the Proton donor/acceptor in catalysis. (S)-2,3,4,5-tetrahydrodipicolinate is bound at residue His154. Lys157 serves as the catalytic Proton donor. 163–164 is a (S)-2,3,4,5-tetrahydrodipicolinate binding site; it reads GT.

This sequence belongs to the DapB family.

It is found in the cytoplasm. The enzyme catalyses (S)-2,3,4,5-tetrahydrodipicolinate + NAD(+) + H2O = (2S,4S)-4-hydroxy-2,3,4,5-tetrahydrodipicolinate + NADH + H(+). It catalyses the reaction (S)-2,3,4,5-tetrahydrodipicolinate + NADP(+) + H2O = (2S,4S)-4-hydroxy-2,3,4,5-tetrahydrodipicolinate + NADPH + H(+). It participates in amino-acid biosynthesis; L-lysine biosynthesis via DAP pathway; (S)-tetrahydrodipicolinate from L-aspartate: step 4/4. Its function is as follows. Catalyzes the conversion of 4-hydroxy-tetrahydrodipicolinate (HTPA) to tetrahydrodipicolinate. The chain is 4-hydroxy-tetrahydrodipicolinate reductase from Burkholderia ambifaria (strain MC40-6).